We begin with the raw amino-acid sequence, 510 residues long: tRNA(Ile)-lysidine synthase (510 aa).

32–37 (SGGLDS) contributes to the ATP binding site.

This sequence belongs to the tRNA(Ile)-lysidine synthase family.

It localises to the cytoplasm. It carries out the reaction cytidine(34) in tRNA(Ile2) + L-lysine + ATP = lysidine(34) in tRNA(Ile2) + AMP + diphosphate + H(+). Ligates lysine onto the cytidine present at position 34 of the AUA codon-specific tRNA(Ile) that contains the anticodon CAU, in an ATP-dependent manner. Cytidine is converted to lysidine, thus changing the amino acid specificity of the tRNA from methionine to isoleucine. The polypeptide is tRNA(Ile)-lysidine synthase (Blochmanniella pennsylvanica (strain BPEN)).